Consider the following 152-residue polypeptide: Nucleoside diphosphate kinase B (152 aa).

The interval 1 to 66 (MANLERTFIA…DRPFFPGLVK (66 aa)) is interaction with AKAP13. Residues Lys12, Phe60, Arg88, Thr94, Arg105, and Asn115 each coordinate ATP. His118 acts as the Pros-phosphohistidine intermediate in catalysis.

This sequence belongs to the NDK family. As to quaternary structure, hexamer of two different chains: An and B (A6, A5B, A4B2, A3B3, A2B4, AB5, B6). Interacts with CAPN8. Interacts with AKAP13. Interacts with ITGB1BP1 (via C-terminal domain region). Interacts with BCL2L10. The cofactor is Mg(2+). As to expression, ubiquitously expressed.

It localises to the cytoplasm. Its subcellular location is the cell projection. The protein localises to the lamellipodium. It is found in the ruffle. The protein resides in the perinuclear region. It localises to the nucleus. It catalyses the reaction a 2'-deoxyribonucleoside 5'-diphosphate + ATP = a 2'-deoxyribonucleoside 5'-triphosphate + ADP. It carries out the reaction a ribonucleoside 5'-diphosphate + ATP = a ribonucleoside 5'-triphosphate + ADP. The enzyme catalyses ATP + protein L-histidine = ADP + protein N-phospho-L-histidine.. Functionally, major role in the synthesis of nucleoside triphosphates other than ATP. The ATP gamma phosphate is transferred to the NDP beta phosphate via a ping-pong mechanism, using a phosphorylated active-site intermediate. Negatively regulates Rho activity by interacting with AKAP13/LBC. Acts as a transcriptional activator of the MYC gene; binds DNA non-specifically. Binds to both single-stranded guanine- and cytosine-rich strands within the nuclease hypersensitive element (NHE) III(1) region of the MYC gene promoter. Does not bind to duplex NHE III(1). Has G-quadruplex (G4) DNA-binding activity, which is independent of its nucleotide-binding and kinase activity. Binds both folded and unfolded G4 with similar low nanomolar affinities. Stabilizes folded G4s regardless of whether they are prefolded or not. Exhibits histidine protein kinase activity. This chain is Nucleoside diphosphate kinase B (NME2), found in Homo sapiens (Human).